The chain runs to 199 residues: Protein GrpE (199 aa).

Residues 1–40 (MEKKKHGTNSISEALKVKAAVEQETATPEPTPQSETESAD) form a disordered region. Over residues 24 to 36 (ETATPEPTPQSET) the composition is skewed to polar residues.

The protein belongs to the GrpE family. As to quaternary structure, homodimer.

It is found in the cytoplasm. Participates actively in the response to hyperosmotic and heat shock by preventing the aggregation of stress-denatured proteins, in association with DnaK and GrpE. It is the nucleotide exchange factor for DnaK and may function as a thermosensor. Unfolded proteins bind initially to DnaJ; upon interaction with the DnaJ-bound protein, DnaK hydrolyzes its bound ATP, resulting in the formation of a stable complex. GrpE releases ADP from DnaK; ATP binding to DnaK triggers the release of the substrate protein, thus completing the reaction cycle. Several rounds of ATP-dependent interactions between DnaJ, DnaK and GrpE are required for fully efficient folding. The sequence is that of Protein GrpE from Geotalea uraniireducens (strain Rf4) (Geobacter uraniireducens).